Here is a 286-residue protein sequence, read N- to C-terminus: MGLAGTKVKQRFGLDPRNTSWSNDKSRFGHRYLESMGWAPGKGLGLVEHATTTHVKVSVKDDTVGLGAKLAKRSGTDDLETDSSGLDDFQRILGRLNGRGREVDEALEQKRKDNIINGKWGMHFIKGEVLCSTWDRKSKSHMLKTALEDESEVNFKSSKKRRQSGSEPSRDSTSHAKRMRGDESKKSTRDQSKQERKEKKIKTEKKEKKEKKEKKEKKEKKEKKEKKEKKEKKERDYGNRASPVEPRKHDQISNVGRLSARAKYIKQKRASVMDAKALNEIFMISK.

The segment at 1 to 20 (MGLAGTKVKQRFGLDPRNTS) is disordered. In terms of domain architecture, G-patch spans 25–71 (KSRFGHRYLESMGWAPGKGLGLVEHATTTHVKVSVKDDTVGLGAKLA). The tract at residues 148 to 255 (EDESEVNFKS…PRKHDQISNV (108 aa)) is disordered. Over residues 168-198 (PSRDSTSHAKRMRGDESKKSTRDQSKQERKE) the composition is skewed to basic and acidic residues. The span at 199–230 (KKIKTEKKEKKEKKEKKEKKEKKEKKEKKEKK) shows a compositional bias: basic residues.

It belongs to the PINX1 family.

It localises to the nucleus. The protein localises to the nucleolus. In terms of biological role, involved in rRNA-processing at A0, A1 and A2 sites and negatively regulates telomerase. The polypeptide is Protein PXR1 (PXR1) (Meyerozyma guilliermondii (strain ATCC 6260 / CBS 566 / DSM 6381 / JCM 1539 / NBRC 10279 / NRRL Y-324) (Yeast)).